The following is a 499-amino-acid chain: Proline--tRNA ligase (499 aa).

Belongs to the class-II aminoacyl-tRNA synthetase family. ProS type 3 subfamily. As to quaternary structure, homodimer.

It localises to the cytoplasm. The catalysed reaction is tRNA(Pro) + L-proline + ATP = L-prolyl-tRNA(Pro) + AMP + diphosphate. Its function is as follows. Catalyzes the attachment of proline to tRNA(Pro) in a two-step reaction: proline is first activated by ATP to form Pro-AMP and then transferred to the acceptor end of tRNA(Pro). This Bdellovibrio bacteriovorus (strain ATCC 15356 / DSM 50701 / NCIMB 9529 / HD100) protein is Proline--tRNA ligase.